The primary structure comprises 1013 residues: AP-2 complex subunit alpha-2 (1013 aa).

HEAT repeat units lie at residues 254–289 (AMRA…VVKN), 354–391 (DIIK…VSNA), 393–430 (DIVE…DLSW), and 521–565 (TVST…CIDV). Residues 652–676 (STDPESVARSLSHPNGTLSNIDPQT) form a disordered region. Residues 663 to 675 (SHPNGTLSNIDPQ) are compositionally biased toward polar residues. Residues 742 to 841 (ALCLKDSGVL…LDFSYKFGTN (100 aa)) form the GAE domain. Residues 760 to 1013 (GIKAEWRGHH…DPGAMLAGLL (254 aa)) form a required for AP180 binding region.

This sequence belongs to the adaptor complexes large subunit family. In terms of assembly, adaptor protein complex 2 (AP-2) is a heterotetramer composed of two large adaptins (alpha-type and beta-type subunits), a medium adaptin (mu-type subunit) and a small adaptin (sigma-type subunit). Interacts with AP180.

It localises to the membrane. It is found in the coated pit. In terms of biological role, subunit of the adaptor protein complex 2 (AP-2). Adaptor protein complexes function in protein transport via transport vesicles in different membrane traffic pathways. Adaptor protein complexes are vesicle coat components and appear to be involved in cargo selection and vesicle formation. AP-2 is involved in clathrin-dependent endocytosis in which cargo proteins are incorporated into vesicles surrounded by clathrin (clathrin-coated vesicles, CCVs) which are destined for fusion with the early endosome. The complex binds polyphosphoinositides. The chain is AP-2 complex subunit alpha-2 (ALPHAC-AD) from Arabidopsis thaliana (Mouse-ear cress).